We begin with the raw amino-acid sequence, 501 residues long: MSSSGTPDLPVLLTDLKIQYTKIFINNEWHDSVSGKKFPVFNPATEEELCQVEEGDKEDVDKAVKAARQAFQIGSPWRTMDASERGRLLYKLADLIERDRLLLATMESMNGGKLYSNAYLNDLAGCIKTLRYCAGWADKIQGRTIPIDGNFFTYTRHEPIGVCGQIIPWNFPLVMLIWKIGPALSCGNTVVVKPAEQTPLTALHVASLIKEAGFPPGVVNIVPGYGPTAGAAISSHMDIDKVAFTGSTEVGKLIKEAAGKSNLKRVTLELGGKSPCIVLADADLDNAVEFAHHGVFYHQGQCCIAASRIFVEESIYDEFVRRSVERAKKYILGNPLTPGVTQGPQIDKEQYDKILDLIESGKKEGAKLECGGGPWGNKGYFVQPTVFSNVTDEMRIAKEEIFGPVQQIMKFKSLDDVIKRANNTFYGLSAGVFTKDIDKAITISSALQAGTVWVNCYGVVSAQCPFGGFKMSGNGRELGEYGFHEYTEVKTVTVKISQKNS.

At serine 2 the chain carries N-acetylserine. Residues lysine 91 and lysine 128 each carry the N6-acetyllysine modification. NAD(+)-binding positions include 167–170 (IPWN), 193–196 (KPAE), 226–227 (GP), and 246–247 (GS). Residue lysine 252 is modified to N6-acetyllysine. Glutamate 269 serves as the catalytic Proton acceptor. Residue 269 to 271 (ELG) coordinates NAD(+). The active-site Nucleophile is the cysteine 303. Residues 336–501 (LTPGVTQGPQ…VTVKISQKNS (166 aa)) form a mediates interaction with PRMT3 region. The residue at position 337 (threonine 337) is a Phosphothreonine. 349-353 (EQYDK) is an NAD(+) binding site. N6-acetyllysine occurs at positions 353 and 367. 400-402 (EIF) is an NAD(+) binding site. Residue lysine 410 is modified to N6-acetyllysine. Serine 413 carries the post-translational modification Phosphoserine. N6-acetyllysine occurs at positions 419, 435, and 495.

This sequence belongs to the aldehyde dehydrogenase family. Homotetramer. Interacts with PRMT3; the interaction is direct, inhibits ALDH1A1 aldehyde dehydrogenase activity and is independent of the methyltransferase activity of PRMT3. Post-translationally, the N-terminus is blocked most probably by acetylation. In terms of tissue distribution, expressed by erythrocytes (at protein level).

It is found in the cytoplasm. Its subcellular location is the cytosol. The protein localises to the cell projection. The protein resides in the axon. The enzyme catalyses an aldehyde + NAD(+) + H2O = a carboxylate + NADH + 2 H(+). It catalyses the reaction all-trans-retinal + NAD(+) + H2O = all-trans-retinoate + NADH + 2 H(+). The catalysed reaction is 9-cis-retinal + NAD(+) + H2O = 9-cis-retinoate + NADH + 2 H(+). It carries out the reaction 11-cis-retinal + NAD(+) + H2O = 11-cis-retinoate + NADH + 2 H(+). The enzyme catalyses 13-cis-retinal + NAD(+) + H2O = 13-cis-retinoate + NADH + 2 H(+). It catalyses the reaction 3-deoxyglucosone + NAD(+) + H2O = 2-dehydro-3-deoxy-D-gluconate + NADH + 2 H(+). The catalysed reaction is (E)-4-hydroxynon-2-enal + NAD(+) + H2O = (E)-4-hydroxynon-2-enoate + NADH + 2 H(+). It carries out the reaction malonaldehyde + NAD(+) + H2O = 3-oxopropanoate + NADH + 2 H(+). The enzyme catalyses hexanal + NAD(+) + H2O = hexanoate + NADH + 2 H(+). It catalyses the reaction propanal + NAD(+) + H2O = propanoate + NADH + 2 H(+). The catalysed reaction is acetaldehyde + NAD(+) + H2O = acetate + NADH + 2 H(+). It carries out the reaction benzaldehyde + NAD(+) + H2O = benzoate + NADH + 2 H(+). The enzyme catalyses 4-aminobutanal + NAD(+) + H2O = 4-aminobutanoate + NADH + 2 H(+). Its pathway is cofactor metabolism; retinol metabolism. Its activity is regulated as follows. Inhibited by citral, disulfiram, and cyanamide. Activated by diethylstilbestrol. Inhibited by duocarmycin analogs. Cytosolic dehydrogenase that catalyzes the irreversible oxidation of a wide range of aldehydes to their corresponding carboxylic acid. Functions downstream of retinol dehydrogenases and catalyzes the oxidation of retinaldehyde into retinoic acid, the second step in the oxidation of retinol/vitamin A into retinoic acid. This pathway is crucial to control the levels of retinol and retinoic acid, two important molecules which excess can be teratogenic and cytotoxic. Also oxidizes aldehydes resulting from lipid peroxidation like (E)-4-hydroxynon-2-enal/HNE, malonaldehyde and hexanal that form protein adducts and are highly cytotoxic. By participating for instance to the clearance of (E)-4-hydroxynon-2-enal/HNE in the lens epithelium prevents the formation of HNE-protein adducts and lens opacification. Also functions downstream of fructosamine-3-kinase in the fructosamine degradation pathway by catalyzing the oxidation of 3-deoxyglucosone, the carbohydrate product of fructosamine 3-phosphate decomposition, which is itself a potent glycating agent that may react with lysine and arginine side-chains of proteins. Also has an aminobutyraldehyde dehydrogenase activity and is probably part of an alternative pathway for the biosynthesis of GABA/4-aminobutanoate in midbrain, thereby playing a role in GABAergic synaptic transmission. This is Aldehyde dehydrogenase 1A1 from Homo sapiens (Human).